A 249-amino-acid chain; its full sequence is 5'-nucleotidase SurE (249 aa).

Residues aspartate 8, aspartate 9, serine 39, and asparagine 91 each contribute to the a divalent metal cation site.

It belongs to the SurE nucleotidase family. The cofactor is a divalent metal cation.

It localises to the cytoplasm. It carries out the reaction a ribonucleoside 5'-phosphate + H2O = a ribonucleoside + phosphate. Nucleotidase that shows phosphatase activity on nucleoside 5'-monophosphates. This Pseudomonas aeruginosa (strain LESB58) protein is 5'-nucleotidase SurE.